We begin with the raw amino-acid sequence, 472 residues long: Protein nucleotidyltransferase YdiU (472 aa).

ATP-binding residues include G86, G88, R89, K109, D121, G122, R172, and R179. D244 serves as the catalytic Proton acceptor. Residues N245 and D254 each coordinate Mg(2+). D254 contributes to the ATP binding site.

This sequence belongs to the SELO family. It depends on Mg(2+) as a cofactor. Mn(2+) is required as a cofactor.

It carries out the reaction L-seryl-[protein] + ATP = 3-O-(5'-adenylyl)-L-seryl-[protein] + diphosphate. The catalysed reaction is L-threonyl-[protein] + ATP = 3-O-(5'-adenylyl)-L-threonyl-[protein] + diphosphate. The enzyme catalyses L-tyrosyl-[protein] + ATP = O-(5'-adenylyl)-L-tyrosyl-[protein] + diphosphate. It catalyses the reaction L-histidyl-[protein] + UTP = N(tele)-(5'-uridylyl)-L-histidyl-[protein] + diphosphate. It carries out the reaction L-seryl-[protein] + UTP = O-(5'-uridylyl)-L-seryl-[protein] + diphosphate. The catalysed reaction is L-tyrosyl-[protein] + UTP = O-(5'-uridylyl)-L-tyrosyl-[protein] + diphosphate. Functionally, nucleotidyltransferase involved in the post-translational modification of proteins. It can catalyze the addition of adenosine monophosphate (AMP) or uridine monophosphate (UMP) to a protein, resulting in modifications known as AMPylation and UMPylation. This Ruegeria pomeroyi (strain ATCC 700808 / DSM 15171 / DSS-3) (Silicibacter pomeroyi) protein is Protein nucleotidyltransferase YdiU.